The chain runs to 653 residues: Beta-galactosidase-1-like protein 3 (653 aa).

The active-site Proton donor is glutamate 227. Glutamate 301 (nucleophile) is an active-site residue.

This sequence belongs to the glycosyl hydrolase 35 family.

This chain is Beta-galactosidase-1-like protein 3 (GLB1L3), found in Homo sapiens (Human).